The following is a 570-amino-acid chain: Protein translocase subunit SecD (570 aa).

Over residues glycine 104–glycine 117 the composition is skewed to polar residues. The tract at residues glycine 104–threonine 198 is disordered. A compositionally biased stretch (basic and acidic residues) spans lysine 122–lysine 146. Low complexity-rich tracts occupy residues alanine 147–serine 161 and alanine 172–aspartate 196. Transmembrane regions (helical) follow at residues alanine 370–tyrosine 390, phenylalanine 395–leucine 415, isoleucine 419–alanine 439, isoleucine 474–glycine 494, and glycine 498–threonine 518. The segment at leucine 540–alanine 570 is disordered.

It belongs to the SecD/SecF family. SecD subfamily. As to quaternary structure, forms a complex with SecF. Part of the essential Sec protein translocation apparatus which comprises SecA, SecYEG and auxiliary proteins SecDF. Other proteins may also be involved.

It localises to the cell membrane. Functionally, part of the Sec protein translocase complex. Interacts with the SecYEG preprotein conducting channel. SecDF uses the proton motive force (PMF) to complete protein translocation after the ATP-dependent function of SecA. In Streptomyces coelicolor (strain ATCC BAA-471 / A3(2) / M145), this protein is Protein translocase subunit SecD.